A 602-amino-acid polypeptide reads, in one-letter code: Elongation factor 4 (602 aa).

The tr-type G domain occupies 7–188; it reads ENIRNFSIIA…SIIRLVPPPK (182 aa). Residues 19-24 and 135-138 contribute to the GTP site; these read DHGKST and NKID.

It belongs to the TRAFAC class translation factor GTPase superfamily. Classic translation factor GTPase family. LepA subfamily.

The protein localises to the cell inner membrane. It carries out the reaction GTP + H2O = GDP + phosphate + H(+). Its function is as follows. Required for accurate and efficient protein synthesis under certain stress conditions. May act as a fidelity factor of the translation reaction, by catalyzing a one-codon backward translocation of tRNAs on improperly translocated ribosomes. Back-translocation proceeds from a post-translocation (POST) complex to a pre-translocation (PRE) complex, thus giving elongation factor G a second chance to translocate the tRNAs correctly. Binds to ribosomes in a GTP-dependent manner. This chain is Elongation factor 4, found in Chlamydia trachomatis serovar L2 (strain ATCC VR-902B / DSM 19102 / 434/Bu).